The sequence spans 268 residues: MEFAHLTVLSLFCLAFVGITATSPREDYWQSIWPNTPLPKTFSDMLIPSGKTNSLPIKSEELKQYSTLFFEHDLHPRKNFILGNTNSVGSIIRPFTKSRQGVTDSIWLANKEKQSLEDFCYSPTAIAEHKHCVSSLKSMIDQVISHFGSTKIKAISSNFAPYQDQYVVEDVKKVGDNAVMCHRLNFEKVVFNCHQVRDTTAYVVSLVASDGTKTKALTVCHHDTRGMNPELLYEALEVTLGTVPVCHFIGNKAAAWVPNHTADNLCVM.

The signal sequence occupies residues 1–22 (MEFAHLTVLSLFCLAFVGITAT). Tandem repeats lie at residues 50–55 (GKTNSL), 83–88 (GNTNSV), 101–106 (GVTDSI), 166–183 (YVVEDVKKVGDNAVMCHR), and 202–222 (YVVSLVASDGTKTKALTVCHH). A 3 X 6 AA approximate repeats region spans residues 50–106 (GKTNSLPIKSEELKQYSTLFFEHDLHPRKNFILGNTNSVGSIIRPFTKSRQGVTDSI). The region spanning 68 to 259 (LFFEHDLHPR…GNKAAAWVPN (192 aa)) is the BURP domain. Residues 166 to 222 (YVVEDVKKVGDNAVMCHRLNFEKVVFNCHQVRDTTAYVVSLVASDGTKTKALTVCHH) are 2 X approximate repeats. N-linked (GlcNAc...) asparagine glycosylation occurs at asparagine 259.

In terms of tissue distribution, seed.

The protein is Embryonic abundant protein USP87 of Vicia faba (Broad bean).